Consider the following 146-residue polypeptide: Hemoglobin cathodic subunit beta (146 aa).

Residues 2–146 form the Globin domain; sequence EWSSSERSTI…LIHALSRQYF (145 aa). The heme b site is built by His63 and His92.

It belongs to the globin family. As to quaternary structure, heterotetramer of two alpha chains and two beta chains. Red blood cells.

Its function is as follows. Involved in oxygen transport from gills to the various peripheral tissues. The sequence is that of Hemoglobin cathodic subunit beta from Gymnothorax unicolor (Brown moray).